Here is a 288-residue protein sequence, read N- to C-terminus: MNNIIDGKALANEILADLKLEIQELKDKTNTSPKLAIVLVGNNPASIIYVKHKIKNAHNIGIDTLLVNLSTNIHTDDLILKINELNLNNEISGIIVQLPLPRSIDTNKILSAVLPLKDIDGFHPLNVGYLHSGISQGFIPCTALGCLAVIKKYETNLSGKNVVIIGRSNIVGKPLSALLLKEHCSVTICHSKSQNLSKISSKADIVIAAIGSPVKLTAEYFNPESIVIDVGINRINGNKIIGDVDFENVKSKVKYITPVPGGIGPMTIAFLLNNTVKAFKDSYSTVCH.

NADP(+) is bound by residues 166 to 168 (GRS), serine 191, and isoleucine 232.

The protein belongs to the tetrahydrofolate dehydrogenase/cyclohydrolase family. Homodimer.

It carries out the reaction (6R)-5,10-methylene-5,6,7,8-tetrahydrofolate + NADP(+) = (6R)-5,10-methenyltetrahydrofolate + NADPH. The catalysed reaction is (6R)-5,10-methenyltetrahydrofolate + H2O = (6R)-10-formyltetrahydrofolate + H(+). It participates in one-carbon metabolism; tetrahydrofolate interconversion. Its function is as follows. Catalyzes the oxidation of 5,10-methylenetetrahydrofolate to 5,10-methenyltetrahydrofolate and then the hydrolysis of 5,10-methenyltetrahydrofolate to 10-formyltetrahydrofolate. In Rickettsia canadensis (strain McKiel), this protein is Bifunctional protein FolD.